Consider the following 110-residue polypeptide: Cytochrome subunit of sulfide dehydrogenase (110 aa).

The first 16 residues, 1-16 (MLAAAPLLLASGNGFA), serve as a signal peptide directing secretion. Positions 41, 44, 45, and 83 each coordinate heme c.

As to quaternary structure, dimer of one cytochrome and one flavoprotein. Post-translationally, binds 1 heme c group covalently per subunit.

It is found in the periplasm. Monoheme cytochrome that function as the electron transport subunit of sulfide dehydrogenase. The protein is Cytochrome subunit of sulfide dehydrogenase (fccA) of Chlorobaculum tepidum (strain ATCC 49652 / DSM 12025 / NBRC 103806 / TLS) (Chlorobium tepidum).